We begin with the raw amino-acid sequence, 1507 residues long: MSTHDMNHHPPRKSHSKRDKPSSSNSGPKIENHKCKWAWQKVFETGKSFLRRDGFPQDCKSKEDFERIKRTGVRKTSENMLEDPRKNFESLQQSSVYQTNSFRNPRYLCRAHLRVDSYYCTIPPKREVSLFNMDDNCTEVLLRDFAKDCGKVEKAYVCIHPETKRHMKMAYVKFATVKEAHNFYSMYHAQNLLATKCTPRIDPFLSILNEEYEVATNGQVLPILPDDLASIDPSVLRDLRANFLRDQNEKYELAMRNTYEDEGGMLSGVIMDTSDHYERDYTMDHDVGPSSMKMSPIPPPPIKEESPPPPPPPPVASVSNLAPVPSVQLPYYNNIQPSSSTMHMPEFRPTEPPPSYSREDPYRSTSRSSLSRHRNRSRSPSDGMDRSGRSSSRRTHRRPESRNGSKNANGDVVKYETYKMEKRKIKYEGGNKKYEQVHIKERTAVIRGKNQLENVSSESASGSSSVDTYPDFSDEERKKKKRPKSPNRSKKDSRAFGWDSTDESDEDTRRRRSGRSQNRSSERKFQTTSSSSTRRELSSTHTNSVPNLKSHETPPPPPPKGHPSVHLQTPYQHVQPQMIPATYYNLPPQHMAPPPITTSLPPFCDFSQPPPGFTPTFKPITNAPLPTPYQASNIPQPGLVQIAALSAAPEPFSSIPGPPPGPAPIQEDVGRAESPEKPSLSERFSGIFGPTQREEPAQVEVEYDYPLKHSESHDDRHSLEDMDVEVSSDGETVSNVEKIECMEEKKRQDLERIAIARTPIVKKCKKRMMDELSRKVAEDIRQQIMRQCFAALDEKLHLKAIADEEKRKKEREEKARQEAEKPSNHLIADMMTLYNNQSFASSSRGFYRKQKPIPKSHPKHQEHHHHAKASVSTPVHSSSTSRNSSVAPTPQRTVSTSSSSSSAATSARVSEDESDSDSTPGEVQRRKTSVLSNDKRRRRASFSSTSIQSSPERQRDVSSSSRTSSSSSTSSMKQEETADEKSRKRKLIMSSDESSTTGSTATSVVSSRQSSLEPQQEKTDGEPPKKKSQTDFISERVSKIEGEERPLPEPVETSGPIIGDSSYLPYKIVHWEKAGIIEMNLPANSIRAHEYHPFTTEHCYFGIDDPRQPKIQIFDHSPCKSEPGSEPLKITPAPWGPIDNVAETGPLIYMDVVTAPKTVQKKQKPRKQVFEKDPYEYYEPPPTKRPAPPPRFKKTFKPRSEEEKKKIIGDCEDLPDLEDQWYLRAALNEMQSEVKSADELPWKKMLTFKEMLRSEDPLLRLNPIRSKKGLPDAFYEDEELDGVIPVAAGCSRARPYEKMTMKQKRSLVRRPDNESHPTAIFSERDETAIRHQHLASKDMRLLQRRLLTSLGDANNDFFKINQLKFRKKMIKFARSRIHGWGLYAMESIAPDEMIVEYIGQTIRSLVAEEREKAYERRGIGSSYLFRIDLHHVIDATKRGNFARFINHSCQPNCYAKVLTIEGEKRIVIYSRTIIKKGEEITYDYKFPIEDDKIDCLCGAKTCRGYLN.

Positions 1–32 (MSTHDMNHHPPRKSHSKRDKPSSSNSGPKIEN) are disordered. Over residues 9-18 (HPPRKSHSKR) the composition is skewed to basic residues. One can recognise an RRM domain in the interval 128 to 199 (VSLFNMDDNC…QNLLATKCTP (72 aa)). Disordered stretches follow at residues 280-578 (DYTM…QPQM), 650-697 (EPFS…EEPA), 803-826 (DEEK…SNHL), 842-1058 (SSRG…GPII), and 1163-1199 (QKPR…FKPR). Over residues 296-315 (PIPPPPIKEESPPPPPPPPV) the composition is skewed to pro residues. Over residues 316–327 (ASVSNLAPVPSV) the composition is skewed to low complexity. A compositionally biased stretch (polar residues) spans 331-342 (YYNNIQPSSSTM). Residues 413-444 (VKYETYKMEKRKIKYEGGNKKYEQVHIKERTA) are compositionally biased toward basic and acidic residues. Residues 456 to 465 (SSESASGSSS) are compositionally biased toward low complexity. Positions 478–488 (KKKKRPKSPNR) are enriched in basic residues. Over residues 566 to 575 (HLQTPYQHVQ) the composition is skewed to polar residues. Basic and acidic residues-rich tracts occupy residues 668-680 (DVGR…KPSL) and 803-823 (DEEK…EKPS). Positions 846–868 (FYRKQKPIPKSHPKHQEHHHHAK) are enriched in basic residues. The segment covering 869–908 (ASVSTPVHSSSTSRNSSVAPTPQRTVSTSSSSSSAATSAR) has biased composition (low complexity). Residues 941-951 (SFSSTSIQSSP) show a composition bias toward polar residues. Residues 958–971 (SSSSRTSSSSSTSS) are compositionally biased toward low complexity. The segment covering 973-982 (KQEETADEKS) has biased composition (basic and acidic residues). Positions 990-1007 (SSDESSTTGSTATSVVSS) are enriched in low complexity. The segment covering 1015 to 1047 (QQEKTDGEPPKKKSQTDFISERVSKIEGEERPL) has biased composition (basic and acidic residues). Residues 1179–1190 (EPPPTKRPAPPP) show a composition bias toward pro residues. Positions 1340–1345 (RLLQRR) match the RxxxRR motif motif. In terms of domain architecture, SET spans 1368-1485 (KMIKFARSRI…KGEEITYDYK (118 aa)). Residue Y1484 participates in S-adenosyl-L-methionine binding. Positions 1491-1507 (DKIDCLCGAKTCRGYLN) constitute a Post-SET domain.

It belongs to the class V-like SAM-binding methyltransferase superfamily. In terms of assembly, component of the Set1C/COMPASS complex (also known as the SET2 complex), which contains at least set-2, swd-2.1, cfp-1, rbbp-5, wdr-5.1, dpy-30 and ash-2. Expressed in all cells of embryo. In L1 larva, it is predominantly expressed in Z2 and Z3 primordial germ cells. In adults, it is predominantly expressed in the germline.

It localises to the nucleus. The catalysed reaction is L-lysyl(4)-[histone H3] + 3 S-adenosyl-L-methionine = N(6),N(6),N(6)-trimethyl-L-lysyl(4)-[histone H3] + 3 S-adenosyl-L-homocysteine + 3 H(+). It carries out the reaction N(6)-methyl-L-lysyl(4)-[histone H3] + S-adenosyl-L-methionine = N(6),N(6)-dimethyl-L-lysyl(4)-[histone H3] + S-adenosyl-L-homocysteine + H(+). It catalyses the reaction N(6),N(6)-dimethyl-L-lysyl(4)-[histone H3] + S-adenosyl-L-methionine = N(6),N(6),N(6)-trimethyl-L-lysyl(4)-[histone H3] + S-adenosyl-L-homocysteine + H(+). In terms of biological role, catalytic component of the COMPASS (Set1C) complex that specifically mono-, di- and trimethylates histone H3 to form H3K4me1/2/3. Binds RNAs which might negatively affect its histone methyltransferase activity. COMPASS recognizes ubiquitinated H2B on one face of the nucleosome which stimulates the methylation of H3 on the opposing face. H3 'Lys-4' methylation represents a specific tag for epigenetic transcriptional activation. Implicated in the epigenetic inheritance of lifespan over several generations. Acts in the germline to limit the longevity of the soma, probably by regulating a lipid metabolism pathway that signals from the germline to the intestine, thereby preventing accumulation of mono-unsaturated fatty acids. Methylation in the germline is required for germline development and fertility, possibly by ensuring genome stability. May act redundantly with mes-3 and mes-4 proteins in the development of a fertile germline. Required for RNAi. Functions as an antagonist of hpl-1 and hpl-2 activity in growth and somatic gonad development. Cooperates with jmjd-3.1 and egl-27 to ensure robust transdifferentiation of the Y rectal cell to the PDA motor neuron during larval development. The polypeptide is Histone-lysine N-methyltransferase set-2 (set-2) (Caenorhabditis elegans).